The following is a 450-amino-acid chain: Glucose-6-phosphate isomerase (450 aa).

Catalysis depends on Glu-291, which acts as the Proton donor. Residues His-312 and Lys-426 contribute to the active site.

Belongs to the GPI family.

It is found in the cytoplasm. The catalysed reaction is alpha-D-glucose 6-phosphate = beta-D-fructose 6-phosphate. It functions in the pathway carbohydrate biosynthesis; gluconeogenesis. Its pathway is carbohydrate degradation; glycolysis; D-glyceraldehyde 3-phosphate and glycerone phosphate from D-glucose: step 2/4. Functionally, catalyzes the reversible isomerization of glucose-6-phosphate to fructose-6-phosphate. This Clostridium perfringens (strain ATCC 13124 / DSM 756 / JCM 1290 / NCIMB 6125 / NCTC 8237 / Type A) protein is Glucose-6-phosphate isomerase.